The primary structure comprises 204 residues: Sex-determining region Y protein (204 aa).

The segment at 59–136 is sufficient for interaction with KPNB1; it reads RVKRPMNAFI…YKYRPRRKAK (78 aa). Positions 60–128 form a DNA-binding region, HMG box; that stretch reads VKRPMNAFIV…MHREKYPNYK (69 aa). 2 required for nuclear localization regions span residues 61–77 and 130–136; these read KRPM…QRRK and RPRRKAK. A sufficient for interaction with EP300 region spans residues 107–139; that stretch reads WPFFQEAQKLQAMHREKYPNYKYRPRRKAKMLP. N6-acetyllysine is present on Lys136. Residues 138–155 are necessary for interaction with ZNF208 isoform KRAB-O; that stretch reads LPKNCSLLPADPASVLCS. The tract at residues 175 to 204 is disordered; the sequence is RMEHQLGHLPPINAASSPQQRDRYSHWTKL. Residues 194-204 show a composition bias toward basic and acidic residues; it reads QRDRYSHWTKL. Residues 198–204 are necessary for interaction with SLC9A3R2; that stretch reads YSHWTKL.

The protein belongs to the SRY family. Interacts with CALM, EP300, HDAC3, KPNB1, ZNF208 isoform KRAB-O, PARP1, SLC9A3R2 and WT1. The interaction with EP300 modulates its DNA-binding activity. The interaction with KPNB1 is sensitive to dissociation by Ran in the GTP-bound form. Interaction with PARP1 impaired its DNA-binding activity. Post-translationally, phosphorylated on serine residues by PKA. Phosphorylation by PKA enhances its DNA-binding activity and stimulates transcription repression. Acetylation of Lys-136 contributes to its nuclear localization and enhances its interaction with KPNB1. Deacetylated by HDAC3. In terms of processing, poly-ADP-ribosylated by PARP1. ADP-ribosylation reduces its DNA-binding activity.

It is found in the nucleus speckle. The protein resides in the cytoplasm. It localises to the nucleus. In terms of biological role, transcriptional regulator that controls a genetic switch in male development. It is necessary and sufficient for initiating male sex determination by directing the development of supporting cell precursors (pre-Sertoli cells) as Sertoli rather than granulosa cells. Involved in different aspects of gene regulation including promoter activation or repression. Binds to the DNA consensus sequence 5'-[AT]AACAA[AT]-3'. SRY HMG box recognizes DNA by partial intercalation in the minor groove and promotes DNA bending. Also involved in pre-mRNA splicing. In male adult brain involved in the maintenance of motor functions of dopaminergic neurons. The chain is Sex-determining region Y protein from Homo sapiens (Human).